Here is a 418-residue protein sequence, read N- to C-terminus: 3-isopropylmalate dehydratase large subunit (418 aa).

[4Fe-4S] cluster is bound by residues Cys299, Cys359, and Cys362.

The protein belongs to the aconitase/IPM isomerase family. LeuC type 2 subfamily. Heterodimer of LeuC and LeuD. [4Fe-4S] cluster is required as a cofactor.

It carries out the reaction (2R,3S)-3-isopropylmalate = (2S)-2-isopropylmalate. It participates in amino-acid biosynthesis; L-leucine biosynthesis; L-leucine from 3-methyl-2-oxobutanoate: step 2/4. Functionally, catalyzes the isomerization between 2-isopropylmalate and 3-isopropylmalate, via the formation of 2-isopropylmaleate. The chain is 3-isopropylmalate dehydratase large subunit from Oleidesulfovibrio alaskensis (strain ATCC BAA-1058 / DSM 17464 / G20) (Desulfovibrio alaskensis).